The primary structure comprises 229 residues: MAKKKASIPFLSLTSIVFLPWCISFTCKKGMEYWVTNWWNTKQSEIFLNIIQEKSILKKFMELEELFFLDELLKEYSETRLQILRTGIHKETIQLIKTHNEDRIYTILHFSTNIIYFIILSGYSILGNQELIILNSWVQEFLYNLSDTIKAFSILLVTDLCIGFHSTHGWELLIGSVYKDFGFIQNDQIISGLVSTFPVILDTILKYWIFRYLNRVSPSLVVIYHSMND.

Helical transmembrane passes span 114-134 and 189-209; these read IIYF…LIIL and IISG…KYWI.

It belongs to the CemA family.

It localises to the plastid. It is found in the chloroplast inner membrane. It carries out the reaction K(+)(in) + H(+)(out) = K(+)(out) + H(+)(in). In terms of biological role, contributes to K(+)/H(+) antiport activity by supporting proton efflux to control proton extrusion and homeostasis in chloroplasts in a light-dependent manner to modulate photosynthesis. Prevents excessive induction of non-photochemical quenching (NPQ) under continuous-light conditions. Indirectly promotes efficient inorganic carbon uptake into chloroplasts. The polypeptide is Potassium/proton antiporter CemA (Lotus japonicus (Lotus corniculatus var. japonicus)).